The following is a 517-amino-acid chain: Anthranilate--CoA ligase (517 aa).

Residue 161-172 (LQYTSGSTGAPK) coordinates AMP.

The protein belongs to the ATP-dependent AMP-binding enzyme family. In terms of assembly, monomer.

It carries out the reaction anthranilate + ATP + CoA = anthraniloyl-CoA + AMP + diphosphate. Its function is as follows. Catalyzes the formation of anthraniloyl-CoA, which is the priming step for entry into the Pseudomonas quinolone signal (PQS) biosynthetic pathway. Also active on a variety of aromatic substrates, including benzoate and chloro and fluoro derivatives of anthranilate. The protein is Anthranilate--CoA ligase (pqsA) of Pseudomonas aeruginosa (strain ATCC 15692 / DSM 22644 / CIP 104116 / JCM 14847 / LMG 12228 / 1C / PRS 101 / PAO1).